The following is a 203-amino-acid chain: Urease accessory protein UreG (203 aa).

11 to 18 contacts GTP; that stretch reads GPVGSGKT.

The protein belongs to the SIMIBI class G3E GTPase family. UreG subfamily. In terms of assembly, homodimer. UreD, UreF and UreG form a complex that acts as a GTP-hydrolysis-dependent molecular chaperone, activating the urease apoprotein by helping to assemble the nickel containing metallocenter of UreC. The UreE protein probably delivers the nickel.

It localises to the cytoplasm. In terms of biological role, facilitates the functional incorporation of the urease nickel metallocenter. This process requires GTP hydrolysis, probably effectuated by UreG. The protein is Urease accessory protein UreG of Prochlorococcus marinus (strain MIT 9312).